Consider the following 75-residue polypeptide: Probable protein BRICK1-B (75 aa).

Residues 41-72 (MSCRSRLATLNEKLTTLERRIEYIEARVTKGE) adopt a coiled-coil conformation.

The protein belongs to the BRK1 family.

The protein resides in the cytoplasm. It is found in the cytoskeleton. Its function is as follows. Involved in regulation of actin and microtubule organization. Part of a WAVE complex that activates the Arp2/3 complex. The polypeptide is Probable protein BRICK1-B (brk1-b) (Xenopus laevis (African clawed frog)).